A 258-amino-acid polypeptide reads, in one-letter code: MPKTLTEKLNAIKATGKGIFVPYIMAGDHEKGLDGLAETIHFLEDLGVSAIEVGIPFSDPVADGPVIEEAGLRSLAHGTSTQALVETLKTIETEIPLVIMTYFNPLFQYGVENFVKDLADTAVKGLIIPDLPHEHANFVEPFLADTDIALIPLVSLTTGIERQKELIEGAEGFVYAVAINGVTGKSGNYRADLDKHLAQLHQVADIPVLTGFGVSSQADLERFNAVSDGVIVGSKIVKALHQGEPIQDFIRQAVAYQK.

Catalysis depends on proton acceptor residues E52 and D63.

This sequence belongs to the TrpA family. In terms of assembly, tetramer of two alpha and two beta chains.

It carries out the reaction (1S,2R)-1-C-(indol-3-yl)glycerol 3-phosphate + L-serine = D-glyceraldehyde 3-phosphate + L-tryptophan + H2O. It participates in amino-acid biosynthesis; L-tryptophan biosynthesis; L-tryptophan from chorismate: step 5/5. Functionally, the alpha subunit is responsible for the aldol cleavage of indoleglycerol phosphate to indole and glyceraldehyde 3-phosphate. This is Tryptophan synthase alpha chain from Streptococcus pneumoniae serotype 19F (strain G54).